We begin with the raw amino-acid sequence, 80 residues long: Teretoxin Tan6.1 (80 aa).

The signal sequence occupies residues 1-21 (MATSGRLLCLCLVLGLVFESL). The propeptide occupies 22-34 (GHPGARLPKDGKR).

It belongs to the teretoxin M (TM) superfamily. In terms of processing, contains 3 disulfide bonds. Expressed by the venom duct.

The protein localises to the secreted. In Terebra anilis (Auger snail), this protein is Teretoxin Tan6.1.